A 3595-amino-acid polypeptide reads, in one-letter code: Replicase polyprotein 1ab (3595 aa).

The C4-type; atypical zinc finger occupies C3 to C23. Residues S56–G164 form the Peptidase C31 domain. Catalysis depends on for Nsp1-alpha papain-like cysteine proteinase activity residues C63 and H130. Positions L239–G350 constitute a Peptidase C32 domain. Active-site for Nsp1-beta papain-like cysteine proteinase activity residues include C246 and H309. Catalysis depends on for Nsp2 cysteine proteinase activity residues C378 and H430. The segment at R482 to K527 is disordered. Positions K511 to A520 are enriched in basic and acidic residues. Residues T633–E736 enclose the Peptidase C33 domain. Residues Q808–P862 are disordered. The segment covering D851–R860 has biased composition (basic and acidic residues). The next 7 helical transmembrane spans lie at M922–I942, I951–S971, V1019–V1039, I1239–V1259, P1316–I1336, A1345–A1365, and A1381–L1401. The tract at residues M922–V1039 is HD1. Residues I1239–W1399 form an HD2 region. Residues G1464–E1664 form the Peptidase S32 domain. Active-site charge relay system; for 3C-like serine proteinase activity residues include H1502, D1527, and S1580. 4 consecutive transmembrane segments (helical) span residues I1673 to V1693, Y1711 to I1731, A1744 to G1764, and A1784 to F1804. Positions L1687 to F1804 are HD3. The NiRAN domain occupies D2083–G2253. Residues G2491 to F2625 form the RdRp catalytic domain. The 67-residue stretch at G2746 to F2812 folds into the AV ZBD domain. The Zn(2+) site is built by C2752, C2755, C2765, C2770, C2773, H2777, H2779, C2782, C2789, H2791, C2798, and C2801. The (+)RNA virus helicase ATP-binding domain occupies D2862 to L3022. ATP is bound at residue G2897–T2904. Residues H3023–D3157 form the (+)RNA virus helicase C-terminal domain. Residues S3196–V3292 form the AV-Nsp11N/CoV-Nsp15M domain. The region spanning M3294–F3416 is the NendoU domain. Active-site residues include H3325, H3340, and K3369.

This sequence belongs to the arteriviridae polyprotein family. In terms of processing, specific enzymatic cleavages in vivo by its own proteases yield mature proteins. There are two alternative pathways for processing. Either nsp4-5 is cleaved, which represents the major pathway or the nsp5-6 and nsp6-7 are processed, which represents the minor pathway. The major pathway occurs when nsp2 acts as a cofactor for nsp4.

The protein localises to the host membrane. It localises to the host cytoplasm. Its subcellular location is the host perinuclear region. It carries out the reaction RNA(n) + a ribonucleoside 5'-triphosphate = RNA(n+1) + diphosphate. It catalyses the reaction ATP + H2O = ADP + phosphate + H(+). The catalysed reaction is uridylyl-uridylyl-ribonucleotide-RNA = a 3'-end uridylyl-2',3'-cyclophospho-uridine-RNA + a 5'-end dephospho-ribonucleoside-RNA. The replicase polyprotein 1ab is a multifunctional protein: it contains the activities necessary for the transcription of negative stranded RNA, leader RNA, subgenomic mRNAs and progeny virion RNA as well as proteinases responsible for the cleavage of the polyprotein into functional products. Its function is as follows. The Nsp1 chain is essential for viral subgenomic mRNA synthesis. Functionally, the 3C-like serine proteinase chain is responsible for the majority of cleavages as it cleaves the C-terminus of the polyprotein. In terms of biological role, plays a role in viral transcription/replication and prevents the simultaneous activation of host cell dsRNA sensors, such as MDA5/IFIH1, OAS, and PKR. Acts by degrading the 5'-polyuridines generated during replication of the poly(A) region of viral genomic and subgenomic RNAs. Catalyzes a two-step reaction in which a 2'3'-cyclic phosphate (2'3'-cP) is first generated by 2'-O transesterification, which is then hydrolyzed to a 3'-phosphate (3'-P). If not degraded, poly(U) RNA would hybridize with poly(A) RNA tails and activate host dsRNA sensors. The helicase chain, which contains a zinc finger structure, displays RNA and DNA duplex-unwinding activities with 5' to 3' polarity. The protein is Replicase polyprotein 1ab (rep) of Simian hemorrhagic fever virus (SHFV).